The following is a 93-amino-acid chain: Aspartyl/glutamyl-tRNA(Asn/Gln) amidotransferase subunit C (93 aa).

Belongs to the GatC family. Heterotrimer of A, B and C subunits.

The enzyme catalyses L-glutamyl-tRNA(Gln) + L-glutamine + ATP + H2O = L-glutaminyl-tRNA(Gln) + L-glutamate + ADP + phosphate + H(+). It catalyses the reaction L-aspartyl-tRNA(Asn) + L-glutamine + ATP + H2O = L-asparaginyl-tRNA(Asn) + L-glutamate + ADP + phosphate + 2 H(+). Allows the formation of correctly charged Asn-tRNA(Asn) or Gln-tRNA(Gln) through the transamidation of misacylated Asp-tRNA(Asn) or Glu-tRNA(Gln) in organisms which lack either or both of asparaginyl-tRNA or glutaminyl-tRNA synthetases. The reaction takes place in the presence of glutamine and ATP through an activated phospho-Asp-tRNA(Asn) or phospho-Glu-tRNA(Gln). The sequence is that of Aspartyl/glutamyl-tRNA(Asn/Gln) amidotransferase subunit C from Methanococcoides burtonii (strain DSM 6242 / NBRC 107633 / OCM 468 / ACE-M).